We begin with the raw amino-acid sequence, 195 residues long: Imidazoleglycerol-phosphate dehydratase (195 aa).

This sequence belongs to the imidazoleglycerol-phosphate dehydratase family.

It is found in the cytoplasm. It carries out the reaction D-erythro-1-(imidazol-4-yl)glycerol 3-phosphate = 3-(imidazol-4-yl)-2-oxopropyl phosphate + H2O. The protein operates within amino-acid biosynthesis; L-histidine biosynthesis; L-histidine from 5-phospho-alpha-D-ribose 1-diphosphate: step 6/9. The polypeptide is Imidazoleglycerol-phosphate dehydratase (Frankia casuarinae (strain DSM 45818 / CECT 9043 / HFP020203 / CcI3)).